The chain runs to 170 residues: ATP synthase subunit b (170 aa).

Residues 22–44 form a helical membrane-spanning segment; that stretch reads IINLAVVVFGLYKFLPGFLGKIL.

It belongs to the ATPase B chain family. In terms of assembly, F-type ATPases have 2 components, F(1) - the catalytic core - and F(0) - the membrane proton channel. F(1) has five subunits: alpha(3), beta(3), gamma(1), delta(1), epsilon(1). F(0) has four main subunits: a(1), b(1), b'(1) and c(10-14). The alpha and beta chains form an alternating ring which encloses part of the gamma chain. F(1) is attached to F(0) by a central stalk formed by the gamma and epsilon chains, while a peripheral stalk is formed by the delta, b and b' chains.

The protein resides in the cellular thylakoid membrane. Functionally, f(1)F(0) ATP synthase produces ATP from ADP in the presence of a proton or sodium gradient. F-type ATPases consist of two structural domains, F(1) containing the extramembraneous catalytic core and F(0) containing the membrane proton channel, linked together by a central stalk and a peripheral stalk. During catalysis, ATP synthesis in the catalytic domain of F(1) is coupled via a rotary mechanism of the central stalk subunits to proton translocation. Its function is as follows. Component of the F(0) channel, it forms part of the peripheral stalk, linking F(1) to F(0). The protein is ATP synthase subunit b of Prochlorococcus marinus (strain NATL1A).